The chain runs to 234 residues: Large ribosomal subunit protein uL1c (234 aa).

This sequence belongs to the universal ribosomal protein uL1 family. In terms of assembly, part of the 50S ribosomal subunit.

It localises to the plastid. The protein localises to the chloroplast. Binds directly to 23S rRNA. Might be involved in E site tRNA release (Potential). The chain is Large ribosomal subunit protein uL1c (rpl1) from Rhodomonas salina (Cryptomonas salina).